Reading from the N-terminus, the 628-residue chain is Phosphomethylpyrimidine synthase (628 aa).

Substrate contacts are provided by residues Asn-229, Met-258, Tyr-287, His-323, 343–345, 384–387, and Glu-423; these read SRG and DGLR. A Zn(2+)-binding site is contributed by His-427. Tyr-450 contacts substrate. His-491 contributes to the Zn(2+) binding site. [4Fe-4S] cluster-binding residues include Cys-571, Cys-574, and Cys-579.

The protein belongs to the ThiC family. In terms of assembly, homodimer. [4Fe-4S] cluster serves as cofactor.

The catalysed reaction is 5-amino-1-(5-phospho-beta-D-ribosyl)imidazole + S-adenosyl-L-methionine = 4-amino-2-methyl-5-(phosphooxymethyl)pyrimidine + CO + 5'-deoxyadenosine + formate + L-methionine + 3 H(+). Its pathway is cofactor biosynthesis; thiamine diphosphate biosynthesis. In terms of biological role, catalyzes the synthesis of the hydroxymethylpyrimidine phosphate (HMP-P) moiety of thiamine from aminoimidazole ribotide (AIR) in a radical S-adenosyl-L-methionine (SAM)-dependent reaction. The chain is Phosphomethylpyrimidine synthase from Variovorax paradoxus (strain S110).